A 155-amino-acid polypeptide reads, in one-letter code: Ribonuclease H (155 aa).

The RNase H type-1 domain maps to 1–142 (MLKQVEIFTD…CDELARAAAS (142 aa)). Mg(2+)-binding residues include Asp-10, Glu-48, Asp-70, and Asp-134.

The protein belongs to the RNase H family. Monomer. It depends on Mg(2+) as a cofactor.

Its subcellular location is the cytoplasm. The catalysed reaction is Endonucleolytic cleavage to 5'-phosphomonoester.. Endonuclease that specifically degrades the RNA of RNA-DNA hybrids. In Klebsiella pneumoniae (strain 342), this protein is Ribonuclease H.